The sequence spans 159 residues: Urease accessory protein UreE (159 aa).

Belongs to the UreE family.

It is found in the cytoplasm. Functionally, involved in urease metallocenter assembly. Binds nickel. Probably functions as a nickel donor during metallocenter assembly. This is Urease accessory protein UreE from Acinetobacter baylyi (strain ATCC 33305 / BD413 / ADP1).